The primary structure comprises 776 residues: Microtubule-associated protein tau (776 aa).

Residues 1-26 (MAEPRQEFEVMEDHAGTYGLGDRKDQ) show a composition bias toward basic and acidic residues. A disordered region spans residues 1-591 (MAEPRQEFEV…PVPMPDLKNV (591 aa)). Ala2 carries the N-acetylalanine modification. A phosphotyrosine mark is found at Tyr18 and Tyr29. A Glycyl lysine isopeptide (Lys-Gly) (interchain with G-Cter in ubiquitin) cross-link involves residue Lys44. A phosphoserine mark is found at Ser46 and Ser61. Over residues 61 to 71 (SETSDAKSTPT) the composition is skewed to polar residues. Phosphothreonine occurs at positions 69, 71, and 111. Basic and acidic residues-rich tracts occupy residues 179-189 (EGGRHAPELLK) and 207-216 (GGKERPGSKE). Ser214 bears the Phosphoserine mark. Residues 217 to 228 (EVDEDRDVDESS) show a composition bias toward acidic residues. Composition is skewed to basic and acidic residues over residues 293–303 (KGQDAHLEFTF) and 314–323 (EQAHSEEHLG). Over residues 324 to 340 (RAAFPGAPGEGPEARGP) the composition is skewed to low complexity. Composition is skewed to basic and acidic residues over residues 344–356 (EDTKEADLPEPSE) and 381–393 (KSKDGTGSDDKKA). Positions 440-452 (KYVSSVTPRTGSS) are enriched in polar residues. Basic and acidic residues predominate over residues 455–466 (KEMKLKGADGKT). At Thr470 the chain carries Phosphothreonine. At Arg472 the chain carries Omega-N-methylarginine. N6,N6-dimethyllysine; alternate is present on Lys480. Position 480 is an N6-acetyllysine; alternate (Lys480). Phosphothreonine is present on residues Thr486, Thr492, and Thr498. Phosphoserine occurs at positions 502, 526, and 530. Residues 517–528 (RSERGEPPKSGD) are compositionally biased toward basic and acidic residues. Positions 529–549 (RSGYSSPGSPGTPGSRSRTPS) are enriched in low complexity. Tyr532 is subject to Phosphotyrosine. Phosphoserine is present on residues Ser533, Ser534, and Ser537. Residues Thr540 and Thr547 each carry the phosphothreonine modification. Position 549 is a phosphoserine (Ser549). Position 552 is a phosphothreonine (Thr552). Lys560 carries the N6-acetyllysine modification. At Thr566 the chain carries Phosphothreonine. 2 positions are modified to phosphoserine: Ser570 and Ser572. Tau/MAP repeat units follow at residues 579 to 609 (QTAPVPMPDLKNVKSKIGSTENLKHQPGGGK), 610 to 640 (VQIINKKLDLSNVQSKCGSKDNIKHVPGGGS), 641 to 671 (VQIVYKPVDLSKVTSKCGSLGNIHHKPGGGQ), and 672 to 703 (VEVKSEKLDFKDRVQSKIGSLDNITHVPGGGN). Residue Lys589 forms a Glycyl lysine isopeptide (Lys-Gly) (interchain with G-Cter in ubiquitin) linkage. Residue Lys594 is modified to N6-acetyllysine; alternate. Lys594 is modified (N6-methyllysine; alternate). Residue Lys594 forms a Glycyl lysine isopeptide (Lys-Gly) (interchain with G-Cter in ubiquitin); alternate linkage. Ser597 bears the Phosphoserine mark. Lys602 participates in a covalent cross-link: Glycyl lysine isopeptide (Lys-Gly) (interchain with G-Cter in ubiquitin). N6-acetyllysine; alternate is present on Lys616. A Glycyl lysine isopeptide (Lys-Gly) (interchain with G-Cter in ubiquitin); alternate cross-link involves residue Lys616. Phosphoserine occurs at positions 620 and 624. Lys625 carries the post-translational modification N6-acetyllysine. The residue at position 628 (Ser628) is a Phosphoserine. N6-acetyllysine; alternate is present on Lys633. Residue Lys633 forms a Glycyl lysine isopeptide (Lys-Gly) (interchain with G-Cter in ubiquitin); alternate linkage. A Phosphoserine modification is found at Ser640. An N6,N6-dimethyllysine; alternate modification is found at Lys646. Lys646, Lys652, and Lys656 each carry N6-acetyllysine; alternate. Residues Lys646, Lys652, and Lys656 each participate in a glycyl lysine isopeptide (Lys-Gly) (interchain with G-Cter in ubiquitin); alternate cross-link. Ser659 bears the Phosphoserine mark. Residues Lys666, Lys678, and Lys682 each carry the N6-acetyllysine; alternate modification. Glycyl lysine isopeptide (Lys-Gly) (interchain with G-Cter in ubiquitin); alternate cross-links involve residues Lys666, Lys678, and Lys682. At Arg684 the chain carries Omega-N-methylarginine. The residue at position 687 (Ser687) is a Phosphoserine. Lys688 participates in a covalent cross-link: Glycyl lysine isopeptide (Lys-Gly) (interchain with G-Cter in ubiquitin). The residue at position 691 (Ser691) is a Phosphoserine. Lys704 bears the N6-acetyllysine; alternate mark. A Glycyl lysine isopeptide (Lys-Gly) (interchain with G-Cter in ubiquitin); alternate cross-link involves residue Lys704. Residue Lys710 forms a Glycyl lysine isopeptide (Lys-Gly) (interchain with G-Cter in ubiquitin) linkage. Lys720 bears the N6-acetyllysine; alternate mark. Residue Lys720 forms a Glycyl lysine isopeptide (Lys-Gly) (interchain with G-Cter in ubiquitin); alternate linkage. Tyr729 carries the phosphotyrosine modification. Residues Ser731 and Ser735 each carry the phosphoserine modification. Residues 733–752 (VVSGDTSPRHLSNVSSTGSI) are disordered. Positions 736 to 751 (GDTSPRHLSNVSSTGS) are enriched in polar residues. Residue Thr738 is modified to Phosphothreonine. Ser739, Ser744, Ser751, and Ser757 each carry phosphoserine. At Thr762 the chain carries Phosphothreonine.

In terms of assembly, interacts with MARK1, MARK2, MARK3 and MARK4. Interacts with SQSTM1 when polyubiquitinated. Interacts with PSMC2 through SQSTM1. Interacts with FKBP4. Binds to CSNK1D. Interacts with SGK1. Interacts with EPM2A; the interaction dephosphorylates MAPT at Ser-396. Interacts with PIN1. Interacts with LRRK2. Interacts with LRP1, leading to endocytosis; this interaction is reduced in the presence of LRPAP1/RAP. In terms of processing, polyubiquitinated. Requires functional TRAF6 and may provoke SQSTM1-dependent degradation by the proteasome. Post-translationally, phosphorylation at various serine and threonine residues in S-P or T-P motifs by proline-directed protein kinases (PDPK1, CDK1, CDK5, GSK3, MAPK) (a few sites per protein in interphase, more in mitosis), and at serine residues in K-X-G-S motifs by MAP/microtubule affinity-regulating kinase (MARK1, MARK2, MARK3 or MARK4), causing detachment from microtubules, and their disassembly. Phosphorylation at Ser-597 by BRSK1 and BRSK2 in neurons affects ability to bind microtubules and plays a role in neuron polarization. Phosphorylated by PHK. Dephosphorylation at several serine and threonine residues by the serine/threonine phosphatase PPP5C. Phosphorylation at Ser-214 by SGK1 mediates microtubule depolymerization and neurite formation in hippocampal neurons.

The protein localises to the cytoplasm. It localises to the cytosol. The protein resides in the cell membrane. Its subcellular location is the cytoskeleton. It is found in the cell projection. The protein localises to the axon. It localises to the dendrite. In terms of biological role, promotes microtubule assembly and stability, and might be involved in the establishment and maintenance of neuronal polarity. The C-terminus binds axonal microtubules while the N-terminus binds neural plasma membrane components, suggesting that tau functions as a linker protein between both. Axonal polarity is predetermined by tau localization (in the neuronal cell) in the domain of the cell body defined by the centrosome. The short isoforms allow plasticity of the cytoskeleton whereas the longer isoforms may preferentially play a role in its stabilization. This is Microtubule-associated protein tau (MAPT) from Pan troglodytes (Chimpanzee).